The chain runs to 417 residues: 4-hydroxy-3-methylbut-2-en-1-yl diphosphate synthase (flavodoxin) (417 aa).

The [4Fe-4S] cluster site is built by Cys307, Cys310, Cys353, and Glu360.

This sequence belongs to the IspG family. Requires [4Fe-4S] cluster as cofactor.

The catalysed reaction is (2E)-4-hydroxy-3-methylbut-2-enyl diphosphate + oxidized [flavodoxin] + H2O + 2 H(+) = 2-C-methyl-D-erythritol 2,4-cyclic diphosphate + reduced [flavodoxin]. It participates in isoprenoid biosynthesis; isopentenyl diphosphate biosynthesis via DXP pathway; isopentenyl diphosphate from 1-deoxy-D-xylulose 5-phosphate: step 5/6. Functionally, converts 2C-methyl-D-erythritol 2,4-cyclodiphosphate (ME-2,4cPP) into 1-hydroxy-2-methyl-2-(E)-butenyl 4-diphosphate. The polypeptide is 4-hydroxy-3-methylbut-2-en-1-yl diphosphate synthase (flavodoxin) (Xylella fastidiosa (strain 9a5c)).